The following is a 290-amino-acid chain: 4-diphosphocytidyl-2-C-methyl-D-erythritol kinase (290 aa).

The active site involves lysine 8. 89–99 (PIGAGVGGGSS) contacts ATP. Residue aspartate 131 is part of the active site.

The protein belongs to the GHMP kinase family. IspE subfamily.

It carries out the reaction 4-CDP-2-C-methyl-D-erythritol + ATP = 4-CDP-2-C-methyl-D-erythritol 2-phosphate + ADP + H(+). The protein operates within isoprenoid biosynthesis; isopentenyl diphosphate biosynthesis via DXP pathway; isopentenyl diphosphate from 1-deoxy-D-xylulose 5-phosphate: step 3/6. Its function is as follows. Catalyzes the phosphorylation of the position 2 hydroxy group of 4-diphosphocytidyl-2C-methyl-D-erythritol. The protein is 4-diphosphocytidyl-2-C-methyl-D-erythritol kinase of Chlamydia felis (strain Fe/C-56) (Chlamydophila felis).